The chain runs to 364 residues: Aminomethyltransferase (364 aa).

The protein belongs to the GcvT family. In terms of assembly, the glycine cleavage system is composed of four proteins: P, T, L and H.

It carries out the reaction N(6)-[(R)-S(8)-aminomethyldihydrolipoyl]-L-lysyl-[protein] + (6S)-5,6,7,8-tetrahydrofolate = N(6)-[(R)-dihydrolipoyl]-L-lysyl-[protein] + (6R)-5,10-methylene-5,6,7,8-tetrahydrofolate + NH4(+). Functionally, the glycine cleavage system catalyzes the degradation of glycine. The polypeptide is Aminomethyltransferase (Salmonella arizonae (strain ATCC BAA-731 / CDC346-86 / RSK2980)).